Consider the following 292-residue polypeptide: Tissue factor (292 aa).

A signal peptide spans 1–32 (MAPPTRLQVPRPGTAVPYTVLLGWLLAQVARA). Over 33–250 (ADTTGRAYNL…SREQGRAREM (218 aa)) the chain is Extracellular. Fibronectin type-III domains follow at residues 35 to 126 (TTGR…PFRN) and 148 to 240 (QVGT…TECT). N-linked (GlcNAc...) asparagine glycosylation is present at N41. 2 consecutive short sequence motifs (WKS motif) follow at residues 44–46 (WKS) and 75–77 (WKS). Residues C79 and C87 are joined by a disulfide bond. N114, N154, N167, and N182 each carry an N-linked (GlcNAc...) asparagine glycan. An intrachain disulfide couples C216 to C239. Residues 251-271 (FFIIGAVVVVALLIIVLSVTV) form a helical membrane-spanning segment. At 272 to 292 (YKCRKARAGPSGKESSPLNIA) the chain is on the cytoplasmic side. Residue C274 is the site of S-palmitoyl cysteine attachment.

Belongs to the tissue factor family. Interacts with HSPE; the interaction, inhibited by heparin, promotes the generation of activated factor X and activates coagulation in the presence of activated factor VII. Brain, heart.

The protein localises to the membrane. Functionally, initiates blood coagulation by forming a complex with circulating factor VII or VIIa. The [TF:VIIa] complex activates factors IX or X by specific limited proteolysis. TF plays a role in normal hemostasis by initiating the cell-surface assembly and propagation of the coagulation protease cascade. This is Tissue factor (F3) from Oryctolagus cuniculus (Rabbit).